We begin with the raw amino-acid sequence, 733 residues long: Polyribonucleotide nucleotidyltransferase (733 aa).

2 residues coordinate Mg(2+): Asp-489 and Asp-495. Residues Pro-556–Ile-615 enclose the KH domain. The 69-residue stretch at Asp-625–Lys-693 folds into the S1 motif domain. The disordered stretch occupies residues Ser-691–Glu-733. Basic residues predominate over residues Lys-704–Lys-723. Over residues Asp-724 to Glu-733 the composition is skewed to basic and acidic residues.

It belongs to the polyribonucleotide nucleotidyltransferase family. It depends on Mg(2+) as a cofactor.

It is found in the cytoplasm. The enzyme catalyses RNA(n+1) + phosphate = RNA(n) + a ribonucleoside 5'-diphosphate. Functionally, involved in mRNA degradation. Catalyzes the phosphorolysis of single-stranded polyribonucleotides processively in the 3'- to 5'-direction. This is Polyribonucleotide nucleotidyltransferase from Streptococcus sanguinis (strain SK36).